The sequence spans 192 residues: Ion-translocating oxidoreductase complex subunit A (192 aa).

6 helical membrane-spanning segments follow: residues 5–25 (LLLL…FLGL), 39–59 (IGMS…SFLV), 72–92 (LRTM…EMLV), 102–122 (ALGI…VALL), 134–154 (AIYG…FSAM), and 171–191 (AIAM…TGLV).

It belongs to the NqrDE/RnfAE family. As to quaternary structure, the complex is composed of six subunits: RnfA, RnfB, RnfC, RnfD, RnfE and RnfG.

It is found in the cell inner membrane. Its function is as follows. Part of a membrane-bound complex that couples electron transfer with translocation of ions across the membrane. This chain is Ion-translocating oxidoreductase complex subunit A, found in Shewanella amazonensis (strain ATCC BAA-1098 / SB2B).